A 179-amino-acid polypeptide reads, in one-letter code: Peptidyl-prolyl cis-trans isomerase A (179 aa).

The PPIase cyclophilin-type domain occupies 15-178 (FFDITIGGVE…KPVVIANCGQ (164 aa)).

It belongs to the cyclophilin-type PPIase family.

It localises to the cytoplasm. The protein localises to the cytosol. The catalysed reaction is [protein]-peptidylproline (omega=180) = [protein]-peptidylproline (omega=0). With respect to regulation, binds cyclosporin A (CsA). CsA mediates some of its effects via an inhibitory action on PPIase. In terms of biological role, PPIase that catalyzes the cis-trans isomerization of proline imidic peptide bonds in oligopeptides and may therefore assist protein folding. The polypeptide is Peptidyl-prolyl cis-trans isomerase A (ppiA) (Dictyostelium discoideum (Social amoeba)).